The sequence spans 469 residues: GTPase Der (469 aa).

EngA-type G domains lie at 3–166 (PVIA…PEDE) and 177–350 (LRLA…ESAN). Residues 9–16 (GRPNVGKS), 56–60 (DTGGI), 118–121 (NKVD), 183–190 (GRPNVGKS), 230–234 (DTAGV), and 295–298 (NKWD) contribute to the GTP site. In terms of domain architecture, KH-like spans 351–435 (LKVSPAKLTQ…PVKIEFKTSE (85 aa)).

This sequence belongs to the TRAFAC class TrmE-Era-EngA-EngB-Septin-like GTPase superfamily. EngA (Der) GTPase family. Associates with the 50S ribosomal subunit.

In terms of biological role, GTPase that plays an essential role in the late steps of ribosome biogenesis. This is GTPase Der from Acinetobacter baumannii (strain ACICU).